We begin with the raw amino-acid sequence, 485 residues long: Glutamyl-tRNA(Gln) amidotransferase subunit A (485 aa).

Active-site charge relay system residues include Lys-78 and Ser-153. The Acyl-ester intermediate role is filled by Ser-177.

This sequence belongs to the amidase family. GatA subfamily. Heterotrimer of A, B and C subunits.

It catalyses the reaction L-glutamyl-tRNA(Gln) + L-glutamine + ATP + H2O = L-glutaminyl-tRNA(Gln) + L-glutamate + ADP + phosphate + H(+). Its function is as follows. Allows the formation of correctly charged Gln-tRNA(Gln) through the transamidation of misacylated Glu-tRNA(Gln) in organisms which lack glutaminyl-tRNA synthetase. The reaction takes place in the presence of glutamine and ATP through an activated gamma-phospho-Glu-tRNA(Gln). The polypeptide is Glutamyl-tRNA(Gln) amidotransferase subunit A (Bacillus cereus (strain ATCC 14579 / DSM 31 / CCUG 7414 / JCM 2152 / NBRC 15305 / NCIMB 9373 / NCTC 2599 / NRRL B-3711)).